The sequence spans 96 residues: Aspartyl/glutamyl-tRNA(Asn/Gln) amidotransferase subunit C (96 aa).

The protein belongs to the GatC family. Heterotrimer of A, B and C subunits.

The enzyme catalyses L-glutamyl-tRNA(Gln) + L-glutamine + ATP + H2O = L-glutaminyl-tRNA(Gln) + L-glutamate + ADP + phosphate + H(+). The catalysed reaction is L-aspartyl-tRNA(Asn) + L-glutamine + ATP + H2O = L-asparaginyl-tRNA(Asn) + L-glutamate + ADP + phosphate + 2 H(+). Its function is as follows. Allows the formation of correctly charged Asn-tRNA(Asn) or Gln-tRNA(Gln) through the transamidation of misacylated Asp-tRNA(Asn) or Glu-tRNA(Gln) in organisms which lack either or both of asparaginyl-tRNA or glutaminyl-tRNA synthetases. The reaction takes place in the presence of glutamine and ATP through an activated phospho-Asp-tRNA(Asn) or phospho-Glu-tRNA(Gln). The polypeptide is Aspartyl/glutamyl-tRNA(Asn/Gln) amidotransferase subunit C (Bacillus anthracis (strain A0248)).